We begin with the raw amino-acid sequence, 996 residues long: RNA2 polyprotein (996 aa).

The interval 363–369 (LRYTIGG) is involved in tubule formation by the movement protein. Positions 368-398 (GGSKPKNKLADKAHNEEAETSDSKGIIDPKD) are disordered. Basic and acidic residues predominate over residues 375–398 (KLADKAHNEEAETSDSKGIIDPKD).

Interacts with the large capsid protein. In terms of assembly, interacts with the small capsid protein. Homomultimer; assembles as pentons. Interacts with the movement protein (via C-terminus). As to quaternary structure, interacts (via C-terminus) with the large capsid protein. Post-translationally, specific enzymatic cleavages by picornain 3C-like protease in vivo yield mature proteins.

Its subcellular location is the host cell junction. It localises to the host plasmodesma. It is found in the virion. Its function is as follows. Responsible for viral RNA2 accumulation. May function by recruiting the RNA1-encoded polyprotein that contains the replication protein to RNA2 and enable its replication. Functionally, transports the viral genome to neighboring plant cells directly through plasmosdesmata, without any budding. The movement protein allows efficient cell to cell propagation, by bypassing the host cell wall barrier. Acts by forming a tubular structure at the host plasmodesmata, enlarging it enough to allow free passage of virion capsids. Binds to GTP and to single-stranded RNA and single-stranded DNA in a non-sequence-specific manner. Together with the mature small capsid protein, forms an icosahedral capsid (T=3) enclosing the viral positive strand RNA genome, with a diameter of approximately 300 Angstroms. The capsid is formed from 60 copies each of the large and the mature small capsid protein. The large capsid protein interacts with the viral RNA. In terms of biological role, together with the large capsid protein, forms an icosahedral capsid (T=3) enclosing the viral positive strand RNA genome, with a diameter of approximately 300 Angstroms. The capsid is formed from 60 copies each of the large and the mature small capsid protein. The mature small capsid protein forms the turrets at the fivefold axes of the viral particle. This chain is RNA2 polyprotein, found in Red clover mottle virus (RCMV).